The sequence spans 95 residues: UPF0473 protein PEPE_1260 (95 aa).

Belongs to the UPF0473 family.

This is UPF0473 protein PEPE_1260 from Pediococcus pentosaceus (strain ATCC 25745 / CCUG 21536 / LMG 10740 / 183-1w).